Here is a 617-residue protein sequence, read N- to C-terminus: 1-deoxy-D-xylulose-5-phosphate synthase (617 aa).

Residues His80 and 121–123 (GHS) each bind thiamine diphosphate. Asp152 is a Mg(2+) binding site. Residues 153 to 154 (GA), Asn181, Tyr277, and Glu360 contribute to the thiamine diphosphate site. Asn181 is a Mg(2+) binding site.

It belongs to the transketolase family. DXPS subfamily. In terms of assembly, homodimer. It depends on Mg(2+) as a cofactor. The cofactor is thiamine diphosphate.

It catalyses the reaction D-glyceraldehyde 3-phosphate + pyruvate + H(+) = 1-deoxy-D-xylulose 5-phosphate + CO2. Its pathway is metabolic intermediate biosynthesis; 1-deoxy-D-xylulose 5-phosphate biosynthesis; 1-deoxy-D-xylulose 5-phosphate from D-glyceraldehyde 3-phosphate and pyruvate: step 1/1. In terms of biological role, catalyzes the acyloin condensation reaction between C atoms 2 and 3 of pyruvate and glyceraldehyde 3-phosphate to yield 1-deoxy-D-xylulose-5-phosphate (DXP). In Blochmanniella floridana, this protein is 1-deoxy-D-xylulose-5-phosphate synthase.